The primary structure comprises 365 residues: DNA replication and repair protein RecF (365 aa).

30 to 37 (GRNAQGKT) provides a ligand contact to ATP.

The protein belongs to the RecF family.

Its subcellular location is the cytoplasm. In terms of biological role, the RecF protein is involved in DNA metabolism; it is required for DNA replication and normal SOS inducibility. RecF binds preferentially to single-stranded, linear DNA. It also seems to bind ATP. This Streptococcus pneumoniae (strain 70585) protein is DNA replication and repair protein RecF.